Reading from the N-terminus, the 323-residue chain is Phosphate acetyltransferase (323 aa).

It belongs to the phosphate acetyltransferase and butyryltransferase family.

It localises to the cytoplasm. The enzyme catalyses acetyl-CoA + phosphate = acetyl phosphate + CoA. The protein operates within metabolic intermediate biosynthesis; acetyl-CoA biosynthesis; acetyl-CoA from acetate: step 2/2. In Bacillus subtilis (strain 168), this protein is Phosphate acetyltransferase (pta).